The following is a 116-amino-acid chain: Nucleoid-associated protein Tfu_0045 (116 aa).

Belongs to the YbaB/EbfC family. Homodimer.

It is found in the cytoplasm. The protein resides in the nucleoid. Binds to DNA and alters its conformation. May be involved in regulation of gene expression, nucleoid organization and DNA protection. The protein is Nucleoid-associated protein Tfu_0045 of Thermobifida fusca (strain YX).